The chain runs to 463 residues: 4-hydroxybenzoate polyprenyltransferase, mitochondrial (463 aa).

Disordered stretches follow at residues 28 to 48 (NNNTNNNNNNNGINKYNSTFN) and 133 to 152 (LLDDNNSNSNNNNNSNNNKP). Positions 137–150 (NNSNSNNNNNSNNN) are enriched in low complexity. 7 helical membrane-spanning segments follow: residues 181-201 (IGVWLLLYPCCWSISLAAPAG), 206-226 (LKTMLVFGIGAYVMRSAGCVI), 257-277 (LIFLGGQLLASFGLILSSLNY), 305-325 (FVLGLAFNWGALAGYSAIAGS), 330-350 (IVAPLYLAGISWTMVYDTIYA), 375-395 (IILSVFSGLVISGMFLTGIAA), and 431-451 (FISNKNFGLYFLLIIIVSKLL).

It belongs to the UbiA prenyltransferase family. Mg(2+) is required as a cofactor.

Its subcellular location is the mitochondrion inner membrane. It catalyses the reaction an all-trans-polyprenyl diphosphate + 4-hydroxybenzoate = a 4-hydroxy-3-(all-trans-polyprenyl)benzoate + diphosphate. The protein operates within cofactor biosynthesis; ubiquinone biosynthesis. Catalyzes the prenylation of para-hydroxybenzoate (PHB) with an all-trans polyprenyl group. Mediates the second step in the final reaction sequence of coenzyme Q (CoQ) biosynthesis, which is the condensation of the polyisoprenoid side chain with PHB. Its function is as follows. Catalyzes the prenylation of para-hydroxybenzoate (PHB) with an all-trans polyprenyl group. Mediates the second step in the final reaction sequence of coenzyme Q (CoQ) biosynthesis, which is the condensation of the polyisoprenoid side chain with PHB, generating the first membrane-bound Q intermediate. This chain is 4-hydroxybenzoate polyprenyltransferase, mitochondrial, found in Dictyostelium discoideum (Social amoeba).